Here is a 153-residue protein sequence, read N- to C-terminus: 3-hydroxyacyl-[acyl-carrier-protein] dehydratase FabZ (153 aa).

The active site involves H54.

It belongs to the thioester dehydratase family. FabZ subfamily.

It localises to the cytoplasm. It carries out the reaction a (3R)-hydroxyacyl-[ACP] = a (2E)-enoyl-[ACP] + H2O. Its function is as follows. Involved in unsaturated fatty acids biosynthesis. Catalyzes the dehydration of short chain beta-hydroxyacyl-ACPs and long chain saturated and unsaturated beta-hydroxyacyl-ACPs. The protein is 3-hydroxyacyl-[acyl-carrier-protein] dehydratase FabZ of Chlamydia trachomatis serovar L2 (strain ATCC VR-902B / DSM 19102 / 434/Bu).